The following is a 488-amino-acid chain: 3-octaprenyl-4-hydroxybenzoate carboxy-lyase (488 aa).

Residue N172 participates in Mn(2+) binding. Residues 175–177 (IYR), 189–191 (RWL), and 194–195 (RG) contribute to the prenylated FMN site. A Mn(2+)-binding site is contributed by E238. Residue D287 is the Proton donor of the active site.

The protein belongs to the UbiD family. In terms of assembly, homohexamer. It depends on prenylated FMN as a cofactor. The cofactor is Mn(2+).

The protein localises to the cell membrane. The enzyme catalyses a 4-hydroxy-3-(all-trans-polyprenyl)benzoate + H(+) = a 2-(all-trans-polyprenyl)phenol + CO2. The protein operates within cofactor biosynthesis; ubiquinone biosynthesis. Its function is as follows. Catalyzes the decarboxylation of 3-octaprenyl-4-hydroxy benzoate to 2-octaprenylphenol, an intermediate step in ubiquinone biosynthesis. This chain is 3-octaprenyl-4-hydroxybenzoate carboxy-lyase, found in Shewanella oneidensis (strain ATCC 700550 / JCM 31522 / CIP 106686 / LMG 19005 / NCIMB 14063 / MR-1).